Reading from the N-terminus, the 463-residue chain is Annexin A7 (463 aa).

Residues 1-18 (MSYPGYPPTGYPPFPGYP) show a composition bias toward pro residues. Disordered regions lie at residues 1–34 (MSYP…QYPY) and 77–149 (SPGG…MTQG). A repeat-rich region region spans residues 1–143 (MSYPGYPPTG…GGQAPYPSQP (143 aa)). Residues 5–20 (GYPPTGYPPFPGYPPA) are 3 X 5 AA tandem repeats of G-Y-P-P-X. Residues 86–99 (GGQGFGAPPGGAGF) are compositionally biased toward gly residues. 4 Annexin repeats span residues 160 to 231 (FDAM…ALFM), 232 to 303 (PSTY…SMCQ), 315 to 387 (QMAQ…TILQ), and 391 to 462 (NRPA…AIVG). K208 is modified (N6-acetyllysine).

This sequence belongs to the annexin family. As to quaternary structure, interacts with PDCD6.

Functionally, calcium/phospholipid-binding protein which promotes membrane fusion and is involved in exocytosis. This Mus musculus (Mouse) protein is Annexin A7 (Anxa7).